The chain runs to 265 residues: Translation initiation factor 2 subunit alpha (265 aa).

The S1 motif domain occupies 12–83; sequence GELIIGTVYK…KKGHVDASLK (72 aa).

This sequence belongs to the eIF-2-alpha family. As to quaternary structure, heterotrimer composed of an alpha, a beta and a gamma chain.

Functionally, eIF-2 functions in the early steps of protein synthesis by forming a ternary complex with GTP and initiator tRNA. This is Translation initiation factor 2 subunit alpha from Methanobrevibacter smithii (strain ATCC 35061 / DSM 861 / OCM 144 / PS).